Here is a 273-residue protein sequence, read N- to C-terminus: Small ribosomal subunit protein uS3 (273 aa).

The region spanning Ile43–Lys111 is the KH type-2 domain. Positions Gln218 to Gly227 are enriched in low complexity. The disordered stretch occupies residues Gln218 to Ala273. Over residues Arg228–Asp239 the composition is skewed to basic and acidic residues. Residues Ala249–Ala273 show a composition bias toward low complexity.

This sequence belongs to the universal ribosomal protein uS3 family. Part of the 30S ribosomal subunit. Forms a tight complex with proteins S10 and S14.

Its function is as follows. Binds the lower part of the 30S subunit head. Binds mRNA in the 70S ribosome, positioning it for translation. The sequence is that of Small ribosomal subunit protein uS3 from Paenarthrobacter aurescens (strain TC1).